A 1046-amino-acid polypeptide reads, in one-letter code: MASSVGNVADSTEPTKRMLSFQGLAELAHREYQAGDFEAAERHCMQLWRQEPDNTGVLLLLSSIHFQCRRLDRSAHFSTLAIKQNPLLAEAYSNLGNVYKERGQLQEAIEHYRHALRLKPDFIDGYINLAAALVAAGDMEGAVQAYVSALQYNPDLYCVRSDLGNLLKALGRLEEAKACYLKAIETQPNFAVAWSNLGCVFNAQGEIWLAIHHFEKAVTLDPNFLDAYINLGNVLKEARIFDRAVAAYLRALSLSPNHAVVHGNLACVYYEQGLIDLAIDTYRRAIELQPHFPDAYCNLANALKEKGSVAEAEDCYNTALRLCPTHADSLNNLANIKREQGNIEEAVRLYRKALEVFPEFAAAHSNLASVLQQQGKLQEALMHYKEAIRISPTFADAYSNMGNTLKEMQDVQGALQCYTRAIQINPAFADAHSNLASIHKDSGNIPEAIASYRTALKLKPDFPDAYCNLAHCLQIVCDWTDYDERMKKLVSIVADQLEKNRLPSVHPHHSMLYPLSHGFRKAIAERHGNLCLDKINVLHKPPYEHPKDLKLSDGRLRVGYVSSDFGNHPTSHLMQSIPGMHNPDKFEVFCYALSPDDGTNFRVKVMAEANHFIDLSQIPCNGKAADRIHQDGIHILVNMNGYTKGARNELFALRPAPIQAMWLGYPGTSGALFMDYIITDQETSPAEVAEQYSEKLAYMPHTFFIGDHANMFPHLKKKAVIDFKSNGHIYDNRIVLNGIDLKAFLDSLPDVKIVKMKCPDGGDNADSSNTALNMPVIPMNTIAEAVIEMINRGQIQITINGFSISNGLATTQINNKAATGEEVPRTIIVTTRSQYGLPEDAIVYCNFNQLYKIDPSTLQMWANILKRVPNSVLWLLRFPAVGEPNIQQYAQNMGLPQNRIIFSPVAPKEEHVRRGQLADVCLDTPLCNGHTTGMDVLWAGTPMVTMPGETLASRVAASQLTCLGCLELIAKNRQEFEDIAVKLGTDLEYLKKIRGKVWKQRISSPLFNTKQYTMELERLYLQMWEHYAAGNKPDHMIKPVEVTESA.

Residue A2 is modified to N-acetylalanine. 2 positions are modified to phosphoserine; by GSK3-beta; alternate: S3 and S4. 2 O-linked (GlcNAc) serine; alternate glycosylation sites follow: S3 and S4. At S20 the chain carries Phosphoserine. TPR repeat units follow at residues 21-54 (FQGLAELAHREYQAGDFEAAERHCMQLWRQEPDN), 89-122 (AEAYSNLGNVYKERGQLQEAIEHYRHALRLKPDF), 123-156 (IDGYINLAAALVAAGDMEGAVQAYVSALQYNPDL), 157-190 (YCVRSDLGNLLKALGRLEEAKACYLKAIETQPNF), 191-224 (AVAWSNLGCVFNAQGEIWLAIHHFEKAVTLDPNF), 225-258 (LDAYINLGNVLKEARIFDRAVAAYLRALSLSPNH), 259-292 (AVVHGNLACVYYEQGLIDLAIDTYRRAIELQPHF), 293-326 (PDAYCNLANALKEKGSVAEAEDCYNTALRLCPTH), 327-360 (ADSLNNLANIKREQGNIEEAVRLYRKALEVFPEF), 361-394 (AAAHSNLASVLQQQGKLQEALMHYKEAIRISPTF), 395-428 (ADAYSNMGNTLKEMQDVQGALQCYTRAIQINPAF), and 429-462 (ADAHSNLASIHKDSGNIPEAIASYRTALKLKPDF). S399 carries O-linked (GlcNAc) serine; by autocatalysis glycosylation. T454 carries the post-translational modification Phosphothreonine. Residues 463–473 (PDAYCNLAHCL) form a TPR 13; truncated repeat. The short motif at 464 to 466 (DAY) is the DFP motif element. A Nuclear localization signal motif is present at residues 487-503 (KKLVSIVADQLEKNRLP). H508 (proton acceptor) is an active-site residue. Residues Q849, K852, 906–908 (APK), 911–914 (HVRR), 930–932 (HTT), and D935 each bind UDP. Y989 is modified (phosphotyrosine). A required for phosphatidylinositol 3,4,5-triphosphate binding region spans residues 991 to 1010 (KKIRGKVWKQRISSPLFNTK).

This sequence belongs to the glycosyltransferase 41 family. O-GlcNAc transferase subfamily. As to quaternary structure, monomer; may exist in different oligomerization states in cells. Homotrimer, oligomerizes via TPR repeats 6 and 7. Trimerization is not necessary for activity in vitro, however it increases affinity for UDP-GlcNAc. Component of a THAP1/THAP3-HCFC1-OGT complex. Component of the NSL complex at least composed of MOF/KAT8, KANSL1, KANSL2, KANSL3, MCRS1, PHF20, OGT1/OGT, WDR5 and HCFC1. Found in a complex with KIF5B, RHOT1, RHOT2 and TRAK1. Found in a complex composed of at least SINHCAF, SIN3A, HDAC1, SAP30, RBBP4, OGT and TET1. Component of a complex composed of KMT2E/MLL5, OGT and USP7; the complex stabilizes KMT2E/MLL5, preventing KMT2E/MLL5 ubiquitination and proteasomal-mediated degradation. Interacts (via TPRs 1-6) with SIN3A; the interaction mediates transcriptional repression in parallel with histone deacetylase. Interacts (via TPR 5-6) with TET1, TET2 and TET3. Interacts (via TPR repeats 6 and 7) with ATXN10. Interacts with NSD2. Interacts with PROSER1; this interaction mediates TET2 O-GlcNAcylation and stability by promoting the interaction between OGT and TET2. In terms of processing, ubiquitinated by the SCF(FBXO31) complex, leading to its proteasomal degradation. Phosphorylation on Ser-3 or Ser-4 by GSK3-beta positively regulates its activity. Phosphorylation at Thr-454 by AMPK promotes nuclear localization. Post-translationally, glycosylated via autocatalysis; O-GlcNAcylation at Ser-399 promotes nuclear localization.

It is found in the nucleus. Its subcellular location is the cytoplasm. The catalysed reaction is L-seryl-[protein] + UDP-N-acetyl-alpha-D-glucosamine = 3-O-(N-acetyl-beta-D-glucosaminyl)-L-seryl-[protein] + UDP + H(+). The enzyme catalyses L-threonyl-[protein] + UDP-N-acetyl-alpha-D-glucosamine = 3-O-(N-acetyl-beta-D-glucosaminyl)-L-threonyl-[protein] + UDP + H(+). It functions in the pathway protein modification; protein glycosylation. Its activity is regulated as follows. Subject to product inhibition by UDP. Catalyzes the transfer of a single N-acetylglucosamine from UDP-GlcNAc to a serine or threonine residue in cytoplasmic and nuclear proteins resulting in their modification with a beta-linked N-acetylglucosamine (O-GlcNAc). Glycosylates a large and diverse number of proteins including histone H2B, AKT1, AMPK, ATG4B, CAPRIN1, EZH2, FNIP1, GSDMD, KRT7, LMNA, LMNB1, LMNB2, RPTOR, HOXA1, PFKL, KMT2E/MLL5, MAPT/TAU, TET2, RBL2, RET, NOD2 and HCFC1. Can regulate their cellular processes via cross-talk between glycosylation and phosphorylation or by affecting proteolytic processing. Involved in insulin resistance in muscle and adipocyte cells via glycosylating insulin signaling components and inhibiting the 'Thr-308' phosphorylation of AKT1, enhancing IRS1 phosphorylation and attenuating insulin signaling. Involved in glycolysis regulation by mediating glycosylation of 6-phosphofructokinase PFKL, inhibiting its activity. Plays a key role in chromatin structure by mediating O-GlcNAcylation of 'Ser-112' of histone H2B: recruited to CpG-rich transcription start sites of active genes via its interaction with TET proteins (TET1, TET2 or TET3). As part of the NSL complex indirectly involved in acetylation of nucleosomal histone H4 on several lysine residues. O-GlcNAcylation of 'Ser-75' of EZH2 increases its stability, and facilitating the formation of H3K27me3 by the PRC2/EED-EZH2 complex. Stabilizes KMT2E/MLL5 by mediating its glycosylation, thereby preventing KMT2E/MLL5 ubiquitination. Regulates circadian oscillation of the clock genes and glucose homeostasis in the liver. Stabilizes clock proteins BMAL1 and CLOCK through O-glycosylation, which prevents their ubiquitination and subsequent degradation. Promotes the CLOCK-BMAL1-mediated transcription of genes in the negative loop of the circadian clock such as PER1/2 and CRY1/2. O-glycosylates HCFC1 and regulates its proteolytic processing and transcriptional activity. Component of a THAP1/THAP3-HCFC1-OGT complex that is required for the regulation of the transcriptional activity of RRM1. Regulates mitochondrial motility in neurons by mediating glycosylation of TRAK1. Promotes autophagy by mediating O-glycosylation of ATG4B. Acts as a regulator of mTORC1 signaling by mediating O-glycosylation of RPTOR and FNIP1: O-GlcNAcylation of RPTOR in response to glucose sufficiency promotes activation of the mTORC1 complex. This Sus scrofa (Pig) protein is UDP-N-acetylglucosamine--peptide N-acetylglucosaminyltransferase 110 kDa subunit (OGT).